Consider the following 426-residue polypeptide: DNA polymerase processivity factor component A20 (426 aa).

Belongs to the poxviruses A20 family. As to quaternary structure, interacts with the DNA polymerase catalytic subunit E9. Interacts with UDG. Component of the Uracil-DNA glycosylase(UDG)-A20-polymerase complex; A20 and UDG form a heterodimeric processivity factor that associates with E9 to form the processive polymerase holoenzyme. Interacts with D5.

In terms of biological role, plays an essential role in viral DNA replication by acting as the polymerase processivity factor together with protein D4. May serve as a bridge which links the DNA polymerase E9 and the uracil DNA glycosylase. The sequence is that of DNA polymerase processivity factor component A20 from Vaccinia virus (strain Ankara) (VACV).